We begin with the raw amino-acid sequence, 669 residues long: Methionine--tRNA ligase (669 aa).

The 'HIGH' region motif lies at 14–24 (YYPSGKLHIGN). Histidine 161 lines the Zn(2+) pocket. Positions 309-313 (KMSKS) match the 'KMSKS' region motif. Lysine 312 is a binding site for ATP. The 104-residue stretch at 566–669 (DFDKVELKVA…KEMPNGAGIA (104 aa)) folds into the tRNA-binding domain.

This sequence belongs to the class-I aminoacyl-tRNA synthetase family. MetG type 2B subfamily. Homodimer.

It is found in the cytoplasm. The catalysed reaction is tRNA(Met) + L-methionine + ATP = L-methionyl-tRNA(Met) + AMP + diphosphate. In terms of biological role, is required not only for elongation of protein synthesis but also for the initiation of all mRNA translation through initiator tRNA(fMet) aminoacylation. This is Methionine--tRNA ligase from Enterococcus faecalis (strain ATCC 700802 / V583).